The chain runs to 473 residues: Photosystem II CP43 reaction center protein (473 aa).

Residues 1–14 (MKTLYSLRRFYHVE) constitute a propeptide that is removed on maturation. An N-acetylthreonine modification is found at Thr-15. Thr-15 carries the phosphothreonine modification. 5 helical membrane-spanning segments follow: residues 69–93 (LFEVAHFVPEKPMYEQGLILLPHLA), 134–155 (LLGPETLEESFPFFGYVWKDRN), 178–200 (KALYFGGVYDTWAPGGGDVRKIA), 255–275 (KPFAWARRAFVWSGEAYLSYS), and 291–312 (WFNNTAYPSEFYGPTGPEASQA). Position 367 (Glu-367) interacts with [CaMn4O5] cluster. The chain crosses the membrane as a helical span at residues 447–471 (RARAAAAGFEKGIDRDFEPVLSMTP).

Belongs to the PsbB/PsbC family. PsbC subfamily. PSII is composed of 1 copy each of membrane proteins PsbA, PsbB, PsbC, PsbD, PsbE, PsbF, PsbH, PsbI, PsbJ, PsbK, PsbL, PsbM, PsbT, PsbX, PsbY, PsbZ, Psb30/Ycf12, at least 3 peripheral proteins of the oxygen-evolving complex and a large number of cofactors. It forms dimeric complexes. Requires Binds multiple chlorophylls and provides some of the ligands for the Ca-4Mn-5O cluster of the oxygen-evolving complex. It may also provide a ligand for a Cl- that is required for oxygen evolution. PSII binds additional chlorophylls, carotenoids and specific lipids. as cofactor.

The protein resides in the plastid membrane. Its function is as follows. One of the components of the core complex of photosystem II (PSII). It binds chlorophyll and helps catalyze the primary light-induced photochemical processes of PSII. PSII is a light-driven water:plastoquinone oxidoreductase, using light energy to abstract electrons from H(2)O, generating O(2) and a proton gradient subsequently used for ATP formation. The sequence is that of Photosystem II CP43 reaction center protein from Cuscuta exaltata (Tall dodder).